The sequence spans 302 residues: Stanniocalcin-2 (302 aa).

The signal sequence occupies residues 1-24; sequence MCAERLGQFMTLALVLATFDPARG. The interval 23–44 is disordered; it reads RGTDATNPPEGPQDRSPQQKGR. N-linked (GlcNAc...) asparagine glycans are attached at residues N73 and N74. Residues 217-302 are disordered; it reads RPPTAPPERQ…EQSEYSDIRR (86 aa). A compositionally biased stretch (basic and acidic residues) spans 227-264; that stretch reads PQVDRTKLSRAHHGEAGHHLPEPSSRETGRGAKGERGS. Residues S250 and S251 each carry the phosphoserine modification. A Phosphothreonine modification is found at T254.

This sequence belongs to the stanniocalcin family. In terms of assembly, homodimer; disulfide-linked.

Its subcellular location is the secreted. Has an anti-hypocalcemic action on calcium and phosphate homeostasis. The polypeptide is Stanniocalcin-2 (STC2) (Pongo abelii (Sumatran orangutan)).